Consider the following 217-residue polypeptide: Glycerol-3-phosphate acyltransferase (217 aa).

Helical transmembrane passes span 1 to 21, 54 to 74, 84 to 104, 126 to 146, and 165 to 185; these read MAWA…SIPT, TAAI…VGGV, AIVP…AAIL, VLLV…LFML, and LLML…LAGI.

Belongs to the PlsY family. In terms of assembly, probably interacts with PlsX.

The protein resides in the cell inner membrane. It catalyses the reaction an acyl phosphate + sn-glycerol 3-phosphate = a 1-acyl-sn-glycero-3-phosphate + phosphate. It participates in lipid metabolism; phospholipid metabolism. Its function is as follows. Catalyzes the transfer of an acyl group from acyl-phosphate (acyl-PO(4)) to glycerol-3-phosphate (G3P) to form lysophosphatidic acid (LPA). This enzyme utilizes acyl-phosphate as fatty acyl donor, but not acyl-CoA or acyl-ACP. The polypeptide is Glycerol-3-phosphate acyltransferase (Rippkaea orientalis (strain PCC 8801 / RF-1) (Cyanothece sp. (strain PCC 8801))).